The following is a 211-amino-acid chain: Protein-methionine-sulfoxide reductase heme-binding subunit MsrQ (211 aa).

Transmembrane regions (helical) follow at residues 10–30, 82–102, 116–136, 153–173, and 178–198; these read WLKV…AWAI, LWCF…ELGV, PYLT…FTST, FVYL…KIIS, and IYAG…LSLF.

It belongs to the MsrQ family. In terms of assembly, heterodimer of a catalytic subunit (MsrP) and a heme-binding subunit (MsrQ). It depends on FMN as a cofactor. The cofactor is heme b.

It localises to the cell inner membrane. Functionally, part of the MsrPQ system that repairs oxidized periplasmic proteins containing methionine sulfoxide residues (Met-O), using respiratory chain electrons. Thus protects these proteins from oxidative-stress damage caused by reactive species of oxygen and chlorine generated by the host defense mechanisms. MsrPQ is essential for the maintenance of envelope integrity under bleach stress, rescuing a wide series of structurally unrelated periplasmic proteins from methionine oxidation, including the primary periplasmic chaperone SurA and the lipoprotein Pal. MsrQ provides electrons for reduction to the reductase catalytic subunit MsrP, using the quinone pool of the respiratory chain. The polypeptide is Protein-methionine-sulfoxide reductase heme-binding subunit MsrQ (Escherichia coli (strain UTI89 / UPEC)).